The following is a 392-amino-acid chain: Caveolae-associated protein 1 (392 aa).

Methionine 1 carries the post-translational modification N-acetylmethionine. The span at 1 to 10 (MEDVTLHIVE) shows a compositional bias: basic and acidic residues. A disordered region spans residues 1 to 45 (MEDVTLHIVERPYSGYPDASSEGPEPTPGEARATEEPSGTGSDEL). Residues 1–100 (MEDVTLHIVE…IQGELSKLGK (100 aa)) are required for homotrimerization and for interaction with CAVIN2 and CAVIN3. A phosphoserine mark is found at serine 21 and serine 38. Threonine 40 bears the Phosphothreonine mark. Residues serine 42 and serine 48 each carry the phosphoserine modification. Residues 54–64 (VLVLSLLDKII) form a nuclear export signal region. The tract at residues 55 to 77 (LVLSLLDKIIGAVDQIQLTQAQL) is leucine-zipper 1. Lysine 118 participates in a covalent cross-link: Glycyl lysine isopeptide (Lys-Gly) (interchain with G-Cter in SUMO2). Serine 120 is subject to Phosphoserine. Residue lysine 124 forms a Glycyl lysine isopeptide (Lys-Gly) (interchain with G-Cter in SUMO2) linkage. The segment at 138 to 154 (KKLEVNEAELLRRRNFK) is nuclear localization signal. Tyrosine 158 bears the Phosphotyrosine mark. Residue lysine 163 forms a Glycyl lysine isopeptide (Lys-Gly) (interchain with G-Cter in SUMO1); alternate linkage. A Glycyl lysine isopeptide (Lys-Gly) (interchain with G-Cter in SUMO2); alternate cross-link involves residue lysine 163. Residue lysine 167 forms a Glycyl lysine isopeptide (Lys-Gly) (interchain with G-Cter in SUMO2) linkage. The leucine-zipper 2 stretch occupies residues 168 to 188 (LSVSKSLKESEALPEKEGDEL). 2 positions are modified to phosphoserine: serine 169 and serine 171. A Glycyl lysine isopeptide (Lys-Gly) (interchain with G-Cter in SUMO2) cross-link involves residue lysine 172. Residues serine 173 and serine 177 each carry the phosphoserine modification. The span at 173–183 (SLKESEALPEK) shows a compositional bias: basic and acidic residues. Residues 173 to 198 (SLKESEALPEKEGDELGEGERPEEDA) form a disordered region. Positions 184–198 (EGDELGEGERPEEDA) are enriched in acidic residues. The stretch at 201–284 (IELSSDEAVE…RMNKLGTRLV (84 aa)) forms a coiled coil. Phosphoserine occurs at positions 204 and 205. Residues 235-251 (KKAFSKEKMEKTKVRTR) form a nuclear localization signal region. A leucine-zipper 3 region spans residues 259–299 (LKTKENLEKTRHTLEKRMNKLGTRLVPVERREKLKTSRDKL). Phosphoserine is present on serine 302. Threonine 304 carries the phosphothreonine modification. Tyrosine 310 bears the Phosphotyrosine mark. Lysine 328 is covalently cross-linked (Glycyl lysine isopeptide (Lys-Gly) (interchain with G-Cter in SUMO2)). The segment at 347-367 (GPDDDEVGAERGAETDLLRGS) is disordered. Residues 354-363 (GAERGAETDL) show a composition bias toward basic and acidic residues. 5 positions are modified to phosphoserine: serine 367, serine 368, serine 381, serine 389, and serine 391.

The protein belongs to the CAVIN family. Component of the CAVIN complex composed of CAVIN1, CAVIN2, CAVIN3 and CAVIN4. Interacts with RNA polymerase I subunit POLR1A/RPA1 and TTF1. Binds the 3' end of pre-rRNA. Interacts with transcription factor ZNF148. Interacts with LIPE in the adipocyte cytoplasm. Interacts with CAV1, CAV3, CAVIN2, CAVIN3 and CAVIN4. Post-translationally, phosphorylated. Present in active and inactive forms. Changes in phosphorylation pattern may alter activity. Phosphorylation at Tyr-158 is essential for its function in the regulation of ribosomal transcriptional activity. In terms of processing, monoubiquitinated. As to expression, expressed in the adipocyte (at protein level). Expressed in all striated and smooth muscles tested including diaphragm, esophageal striated muscle, fibroblast, endocardial endothelium, epicardial mesothelium, intestinal smooth muscle, masseter, soleus muscle, vascular smooth muscle and white gastrocnemius muscle (at protein level). Expressed in the endothelium and perineural sheath (at protein level). Not expressed in hepatocytes.

The protein resides in the membrane. The protein localises to the caveola. It is found in the cell membrane. Its subcellular location is the microsome. It localises to the endoplasmic reticulum. The protein resides in the cytoplasm. The protein localises to the cytosol. It is found in the mitochondrion. Its subcellular location is the nucleus. In terms of biological role, plays an important role in caveolae formation and organization. Essential for the formation of caveolae in all tissues. Core component of the CAVIN complex which is essential for recruitment of the complex to the caveolae in presence of calveolin-1 (CAV1). Essential for normal oligomerization of CAV1. Promotes ribosomal transcriptional activity in response to metabolic challenges in the adipocytes and plays an important role in the formation of the ribosomal transcriptional loop. Dissociates transcription complexes paused by DNA-bound TTF1, thereby releasing both RNA polymerase I and pre-RNA from the template. The caveolae biogenesis pathway is required for the secretion of proteins such as GASK1A. The polypeptide is Caveolae-associated protein 1 (Rattus norvegicus (Rat)).